Here is a 397-residue protein sequence, read N- to C-terminus: Putative 3'(2'),5'-bisphosphate nucleotidase, mitochondrial (397 aa).

Residues 1 to 16 (MYILDTGARFSAVRFS) constitute a mitochondrion transit peptide. Catalysis depends on Asp-91, which acts as the Proton acceptor. 4 residues coordinate Mg(2+): Glu-114, Asp-174, Ile-176, and Asp-177. Thr-179 functions as the Proton acceptor in the catalytic mechanism. Residues Thr-179, Ser-305, Lys-308, and Asp-334 each contribute to the adenosine 3',5'-bisphosphate site. Ser-305, Lys-308, and Asp-334 together coordinate AMP. Residue Asp-334 coordinates Mg(2+).

Belongs to the inositol monophosphatase superfamily. It depends on Mg(2+) as a cofactor.

The protein resides in the mitochondrion. It carries out the reaction 3'-phosphoadenylyl sulfate + H2O = adenosine 5'-phosphosulfate + phosphate. The enzyme catalyses adenosine 3',5'-bisphosphate + H2O = AMP + phosphate. It catalyses the reaction adenosine 2',5'-bisphosphate + H2O = AMP + phosphate. Functionally, phosphatase that converts adenosine 3'-phosphate 5'-phosphosulfate (PAPS) to adenosine 5'-phosphosulfate (APS) and 3'(2')-phosphoadenosine 5'-phosphate (PAP) to AMP. This chain is Putative 3'(2'),5'-bisphosphate nucleotidase, mitochondrial, found in Arabidopsis thaliana (Mouse-ear cress).